Consider the following 341-residue polypeptide: MLVLGLETSCDETGVALYDSERGLLADALFSQIDLHRIYGGVVPELASRDHVKRMLPLIRQVLDEAGREPSDIDALAYTAGPGLVGALLVGASCAQALAFAWGVPAVGVHHMEGHLLAPMLEEQPPAFPFVALLVSGGHTQLVRVDGIGQYQLLGESLDDAAGEAFDKTAKLMGLNYPGGPEIAKLAEQGTPGRFVFPRPMTDRPGLDFSFSGLKTFALNTWQQCRDSGDDLDQARRDIALAFQQAVVETLTIKCKRALKQTGLNSLVIAGGVSANKALREHLERMLGELKGKVFYARPRFCTDNGAMIAYAGCQRLLAGQHEDLAIKVQARWPMESLPAL.

His111 and His115 together coordinate Fe cation. Substrate contacts are provided by residues 134–138 (LVSGG), Asp167, Gly180, and Asn276. Asp304 lines the Fe cation pocket.

The protein belongs to the KAE1 / TsaD family. Fe(2+) is required as a cofactor.

The protein localises to the cytoplasm. It carries out the reaction L-threonylcarbamoyladenylate + adenosine(37) in tRNA = N(6)-L-threonylcarbamoyladenosine(37) in tRNA + AMP + H(+). Its function is as follows. Required for the formation of a threonylcarbamoyl group on adenosine at position 37 (t(6)A37) in tRNAs that read codons beginning with adenine. Is involved in the transfer of the threonylcarbamoyl moiety of threonylcarbamoyl-AMP (TC-AMP) to the N6 group of A37, together with TsaE and TsaB. TsaD likely plays a direct catalytic role in this reaction. The protein is tRNA N6-adenosine threonylcarbamoyltransferase of Ectopseudomonas mendocina (strain ymp) (Pseudomonas mendocina).